A 290-amino-acid polypeptide reads, in one-letter code: Light-independent protochlorophyllide reductase iron-sulfur ATP-binding protein (290 aa).

Residues 10-15 and Lys-39 contribute to the ATP site; that span reads GIGKST. Ser-14 provides a ligand contact to Mg(2+). The [4Fe-4S] cluster site is built by Cys-95 and Cys-129. Position 180 to 181 (180 to 181) interacts with ATP; the sequence is NR.

The protein belongs to the NifH/BchL/ChlL family. In terms of assembly, homodimer. Protochlorophyllide reductase is composed of three subunits; ChlL, ChlN and ChlB. [4Fe-4S] cluster is required as a cofactor.

The protein localises to the plastid. Its subcellular location is the chloroplast. It catalyses the reaction chlorophyllide a + oxidized 2[4Fe-4S]-[ferredoxin] + 2 ADP + 2 phosphate = protochlorophyllide a + reduced 2[4Fe-4S]-[ferredoxin] + 2 ATP + 2 H2O. It functions in the pathway porphyrin-containing compound metabolism; chlorophyll biosynthesis (light-independent). In terms of biological role, component of the dark-operative protochlorophyllide reductase (DPOR) that uses Mg-ATP and reduced ferredoxin to reduce ring D of protochlorophyllide (Pchlide) to form chlorophyllide a (Chlide). This reaction is light-independent. The L component serves as a unique electron donor to the NB-component of the complex, and binds Mg-ATP. The protein is Light-independent protochlorophyllide reductase iron-sulfur ATP-binding protein of Angiopteris evecta (Mule's foot fern).